We begin with the raw amino-acid sequence, 125 residues long: Glycine cleavage system H protein (125 aa).

Positions V22–K104 constitute a Lipoyl-binding domain. K63 is subject to N6-lipoyllysine.

This sequence belongs to the GcvH family. The glycine cleavage system is composed of four proteins: P, T, L and H. It depends on (R)-lipoate as a cofactor.

In terms of biological role, the glycine cleavage system catalyzes the degradation of glycine. The H protein shuttles the methylamine group of glycine from the P protein to the T protein. In Brucella abortus (strain 2308), this protein is Glycine cleavage system H protein.